A 280-amino-acid polypeptide reads, in one-letter code: Eukaryotic translation initiation factor 3 subunit F-1 (280 aa).

Residues 8-138 form the MPN domain; that stretch reads VRVHPVVLFQ…LRAYVCIQLG (131 aa).

Belongs to the eIF-3 subunit F family. As to quaternary structure, component of the eukaryotic translation initiation factor 3 (eIF-3) complex. The eIF-3 complex interacts with pix.

Its subcellular location is the cytoplasm. Component of the eukaryotic translation initiation factor 3 (eIF-3) complex, which is involved in protein synthesis of a specialized repertoire of mRNAs and, together with other initiation factors, stimulates binding of mRNA and methionyl-tRNAi to the 40S ribosome. The eIF-3 complex specifically targets and initiates translation of a subset of mRNAs involved in cell proliferation. This is Eukaryotic translation initiation factor 3 subunit F-1 from Drosophila yakuba (Fruit fly).